The following is a 123-amino-acid chain: Small ribosomal subunit protein uS13 (123 aa).

The interval 93 to 123 is disordered; sequence RRNLPVRGQKTKTNARTRKGPKRAIGGKKKK.

The protein belongs to the universal ribosomal protein uS13 family. In terms of assembly, part of the 30S ribosomal subunit. Forms a loose heterodimer with protein S19. Forms two bridges to the 50S subunit in the 70S ribosome.

Functionally, located at the top of the head of the 30S subunit, it contacts several helices of the 16S rRNA. In the 70S ribosome it contacts the 23S rRNA (bridge B1a) and protein L5 of the 50S subunit (bridge B1b), connecting the 2 subunits; these bridges are implicated in subunit movement. Contacts the tRNAs in the A and P-sites. This chain is Small ribosomal subunit protein uS13, found in Clostridium botulinum (strain Loch Maree / Type A3).